The chain runs to 435 residues: Histidinol dehydrogenase (435 aa).

NAD(+) contacts are provided by Y131, Q189, and N212. 3 residues coordinate substrate: S238, Q260, and H263. Residues Q260 and H263 each contribute to the Zn(2+) site. Catalysis depends on proton acceptor residues E327 and H328. Residues H328, D361, E415, and H420 each coordinate substrate. D361 provides a ligand contact to Zn(2+). Position 420 (H420) interacts with Zn(2+).

It belongs to the histidinol dehydrogenase family. In terms of assembly, homodimer. Requires Zn(2+) as cofactor.

The catalysed reaction is L-histidinol + 2 NAD(+) + H2O = L-histidine + 2 NADH + 3 H(+). It participates in amino-acid biosynthesis; L-histidine biosynthesis; L-histidine from 5-phospho-alpha-D-ribose 1-diphosphate: step 9/9. In terms of biological role, catalyzes the sequential NAD-dependent oxidations of L-histidinol to L-histidinaldehyde and then to L-histidine. This is Histidinol dehydrogenase from Buchnera aphidicola subsp. Baizongia pistaciae (strain Bp).